A 604-amino-acid chain; its full sequence is Protein TAX4 (604 aa).

5 disordered regions span residues 38 to 77, 132 to 249, 267 to 299, 338 to 380, and 394 to 428; these read HPNGNAGSAERPRHLKVESAPVVKSEPSLPRMRQPEPRSI, SFSN…RQQE, GTLPDLIPRSQRKTSKPRFKHRLLRSPEQQQEN, DETF…KGLK, and PFPHHHHHHHQLHNPNSHHLHTHHHTSSHKFNEDK. The span at 176–185 shows a compositional bias: polar residues; the sequence is YDNNVRSRSI. Low complexity-rich tracts occupy residues 186-203 and 224-240; these read SPQVSYSTSLSSSCSISS and SMSSYSLASKASAKASL. Composition is skewed to basic residues over residues 276-290, 366-379, and 396-421; these read SQRKTSKPRFKHRLL, KKKKSRRSKIKKGL, and PHHHHHHHQLHNPNSHHLHTHHHTSS. Residues 469–559 form the EH domain; sequence ANEDDESHLQ…RVWNSVDGYV (91 aa).

It belongs to the IRS4 family. In terms of assembly, interacts with INP51.

Functionally, with IRS4, acts as a positive regulator of INP51 activity and phosphatidylinositol 4,5-bisphosphate turnover. Negatively regulates signaling through the cell integrity pathway, including the MAP kinase SLT2. The chain is Protein TAX4 (TAX4) from Saccharomyces cerevisiae (strain ATCC 204508 / S288c) (Baker's yeast).